A 210-amino-acid polypeptide reads, in one-letter code: Somatotropin (210 aa).

An N-terminal signal peptide occupies residues 1-22 (MGQVFLLMPVLLVSCFLSQGAA). His38 provides a ligand contact to Zn(2+). Cys71 and Cys183 form a disulfide bridge. Glu192 contributes to the Zn(2+) binding site. Cys200 and Cys208 are joined by a disulfide.

This sequence belongs to the somatotropin/prolactin family.

The protein resides in the secreted. Growth hormone plays an important role in growth control and is involved in the regulation of several anabolic processes. Implicated as an osmoregulatory substance important for seawater adaptation. This is Somatotropin (gh) from Salmo salar (Atlantic salmon).